The chain runs to 75 residues: CLAVATA3/ESR (CLE)-related protein 2 (75 aa).

Positions 1–22 (MAKLSFTFCFLLFLLLSSIAAG) are cleaved as a signal peptide. Residues 40–75 (PSIEATSPTVEDDQAAGSHGKSPERLSPGGPDPQHH) are disordered. Hydroxyproline occurs at positions 67 and 70. The O-linked (Ara...) hydroxyproline glycan is linked to Pro70.

It belongs to the CLV3/ESR signal peptide family. As to quaternary structure, interacts with the extracellular leucine-rich repeat region of CLV1. Post-translationally, the O-glycosylation (arabinosylation) of the hydroxyproline Pro-70 enhances binding affinity of the CLE2p peptide for its receptor. As to expression, mostly expressed in roots and seedlings, and, to a lower extent, in apex.

It is found in the secreted. The protein resides in the extracellular space. Its function is as follows. Extracellular signal peptide that regulates cell fate. May act with CLV1 as a ligand-receptor pair in a signal transduction pathway, coordinating growth between adjacent meristematic regions. The chain is CLAVATA3/ESR (CLE)-related protein 2 from Arabidopsis thaliana (Mouse-ear cress).